Here is a 526-residue protein sequence, read N- to C-terminus: AAA ATPase forming ring-shaped complexes (526 aa).

The segment covering 1–18 (MGDMASSTDPAAHNSFSD) has biased composition (polar residues). The interval 1 to 20 (MGDMASSTDPAAHNSFSDFN) is disordered. A coiled-coil region spans residues 20–59 (NREEMTRLADNVRSLQRTNQDLSARNTKLAEMLKSSRDKL). Residue 257–262 (GCGKTL) participates in ATP binding.

Belongs to the AAA ATPase family. As to quaternary structure, homohexamer. Assembles into a hexameric ring structure.

The chain is AAA ATPase forming ring-shaped complexes from Corynebacterium efficiens (strain DSM 44549 / YS-314 / AJ 12310 / JCM 11189 / NBRC 100395).